The sequence spans 224 residues: MTRPRVKSYFIDYSLKKVMLDEFLANYFKDAGYAGMELYKTPTGYRVVIYAEYPGRIIGRGGSIIRKLMTIMQTHFGLENVNITVSPVPDPDLNARIVAFRIVRALEKEIPYRRVAMAMLRRVMEAGAVGAEIIISGKLRSERARYEKLKAGRIYKAGDMVDYVVDRAVGKALLKRGVYGVEVVIVRPHLKPPDYVEIKSVKPEELADLIPVEKEETNESISPQ.

In terms of domain architecture, KH type-2 spans L20–P89.

Belongs to the universal ribosomal protein uS3 family. Part of the 30S ribosomal subunit.

In terms of biological role, binds the lower part of the 30S subunit head. In Staphylothermus marinus (strain ATCC 43588 / DSM 3639 / JCM 9404 / F1), this protein is Small ribosomal subunit protein uS3.